Here is a 373-residue protein sequence, read N- to C-terminus: tRNA-specific 2-thiouridylase MnmA (373 aa).

Residues 12–19 and Met-38 contribute to the ATP site; that span reads GMSGGVDS. The interval 98–100 is interaction with target base in tRNA; that stretch reads NPD. Residue Cys-103 is the Nucleophile of the active site. The cysteines at positions 103 and 200 are disulfide-linked. Gly-127 contributes to the ATP binding site. Residues 150–152 form an interaction with tRNA region; it reads KDQ. Cys-200 (cysteine persulfide intermediate) is an active-site residue. The interaction with tRNA stretch occupies residues 312–313; sequence RY.

This sequence belongs to the MnmA/TRMU family.

Its subcellular location is the cytoplasm. It catalyses the reaction S-sulfanyl-L-cysteinyl-[protein] + uridine(34) in tRNA + AH2 + ATP = 2-thiouridine(34) in tRNA + L-cysteinyl-[protein] + A + AMP + diphosphate + H(+). In terms of biological role, catalyzes the 2-thiolation of uridine at the wobble position (U34) of tRNA, leading to the formation of s(2)U34. The polypeptide is tRNA-specific 2-thiouridylase MnmA (Streptococcus pneumoniae (strain Hungary19A-6)).